Reading from the N-terminus, the 1078-residue chain is Lon protease homolog, mitochondrial (1078 aa).

The N-terminal 27 residues, 1–27, are a transit peptide targeting the mitochondrion; the sequence is MIKASKCNKPRALFLVRVSIPRTFIRN. The segment covering 71-123 has biased composition (basic and acidic residues); sequence SEKEKQPSTDKSNDKDKPSRKEKGKDKEKENEEKKDINMDEKYEINEETDTKP. The segment at 71 to 179 is disordered; the sequence is SEKEKQPSTD…KEFLSPSDSG (109 aa). Residues 127–157 show a composition bias toward low complexity; it reads PNNPVSSKSNISSSSGGDNNNNNNNNNNNND. The segment covering 158–172 has biased composition (basic and acidic residues); that stretch reads SDGKNDDGSPKDKEF. The region spanning 182 to 400 is the Lon N-terminal domain; the sequence is PPFLAIAMKD…LSLQLLQVEA (219 aa). 548 to 555 contacts ATP; sequence GPPGTGKT. Residues 792–825 are disordered; sequence NSPIEYIQSNTEVKAETTTESQQEQEKEKEKDEE. The span at 815–825 shows a compositional bias: basic and acidic residues; that stretch reads EQEKEKEKDEE. The Lon proteolytic domain occupies 861–1049; the sequence is TLNPGVATGL…SEVFEHLFQG (189 aa). Catalysis depends on residues Ser955 and Lys998.

Belongs to the peptidase S16 family. Homohexamer or homoheptamer. Organized in a ring with a central cavity.

It localises to the mitochondrion matrix. The catalysed reaction is Hydrolysis of proteins in presence of ATP.. ATP-dependent serine protease that mediates the selective degradation of misfolded, unassembled or oxidatively damaged polypeptides as well as certain short-lived regulatory proteins in the mitochondrial matrix. May also have a chaperone function in the assembly of inner membrane protein complexes. Participates in the regulation of mitochondrial gene expression and in the maintenance of the integrity of the mitochondrial genome. Binds to mitochondrial DNA in a site-specific manner. This Candida albicans (strain SC5314 / ATCC MYA-2876) (Yeast) protein is Lon protease homolog, mitochondrial.